The sequence spans 162 residues: Cytochrome c-type biogenesis protein CcmE (162 aa).

Residues 1–8 are Cytoplasmic-facing; sequence MNPRRKKR. The helical; Signal-anchor for type II membrane protein transmembrane segment at 9 to 29 threads the bilayer; sequence LALVVGLIGGVAAVASLLLYA. Residues 30-162 are Periplasmic-facing; sequence LNTNLNLFYT…YTETQKGGSR (133 aa). Residues His-131 and Tyr-135 each contribute to the heme site.

The protein belongs to the CcmE/CycJ family.

The protein resides in the cell inner membrane. Heme chaperone required for the biogenesis of c-type cytochromes. Transiently binds heme delivered by CcmC and transfers the heme to apo-cytochromes in a process facilitated by CcmF and CcmH. This chain is Cytochrome c-type biogenesis protein CcmE, found in Shewanella amazonensis (strain ATCC BAA-1098 / SB2B).